Here is a 300-residue protein sequence, read N- to C-terminus: UPF0761 membrane protein PSHAa0171 (300 aa).

6 helical membrane passes run 47 to 67, 100 to 120, 143 to 163, 181 to 201, 215 to 235, and 249 to 269; these read LLSL…FPGF, NANQ…LLLI, FAVY…SIAV, FSGF…FIML, AIPG…GFAL, and AVAT…VVLL.

This sequence belongs to the UPF0761 family.

Its subcellular location is the cell inner membrane. The polypeptide is UPF0761 membrane protein PSHAa0171 (Pseudoalteromonas translucida (strain TAC 125)).